Consider the following 211-residue polypeptide: Phosphatidylglycerophosphatase C (211 aa).

Residues 1 to 33 are Cytoplasmic-facing; it reads MATHERRVVFFDLDGTLHQQDMFGSFLRYLLRR. A helical membrane pass occupies residues 34–54; sequence QPLNALLVLPLLPIIAIALLI. The Periplasmic segment spans residues 55–211; sequence KGRAARWPMS…TPRGELQQLE (157 aa).

It depends on Mg(2+) as a cofactor.

Its subcellular location is the cell inner membrane. The catalysed reaction is a 1,2-diacyl-sn-glycero-3-phospho-(1'-sn-glycero-3'-phosphate) + H2O = a 1,2-diacyl-sn-glycero-3-phospho-(1'-sn-glycerol) + phosphate. Its pathway is phospholipid metabolism; phosphatidylglycerol biosynthesis; phosphatidylglycerol from CDP-diacylglycerol: step 2/2. Its function is as follows. Lipid phosphatase which dephosphorylates phosphatidylglycerophosphate (PGP) to phosphatidylglycerol (PG). In Escherichia coli (strain K12), this protein is Phosphatidylglycerophosphatase C (pgpC).